Reading from the N-terminus, the 119-residue chain is Single-stranded DNA-binding protein (119 aa).

The SSB domain occupies 3–102; the sequence is INIVTLVGRV…IRVDQLELLG (100 aa).

As to quaternary structure, homotetramer.

This chain is Single-stranded DNA-binding protein (ssb1), found in Anabaena variabilis.